Here is a 351-residue protein sequence, read N- to C-terminus: Ferredoxin--NADP reductase (351 aa).

Positions 44, 52, 57, 97, 132, 296, and 337 each coordinate FAD.

The protein belongs to the ferredoxin--NADP reductase type 2 family. As to quaternary structure, homodimer. It depends on FAD as a cofactor.

It catalyses the reaction 2 reduced [2Fe-2S]-[ferredoxin] + NADP(+) + H(+) = 2 oxidized [2Fe-2S]-[ferredoxin] + NADPH. The chain is Ferredoxin--NADP reductase from Paraburkholderia phymatum (strain DSM 17167 / CIP 108236 / LMG 21445 / STM815) (Burkholderia phymatum).